A 219-amino-acid polypeptide reads, in one-letter code: Glutathione S-transferase 3 (219 aa).

A GST N-terminal domain is found at 3-82 (DEVVLLDTWA…YIDEVWNDKS (80 aa)). Glutathione is bound by residues Ser13, Ile54, and 66–67 (ES). One can recognise a GST C-terminal domain in the interval 88-216 (DPYKRSQARF…GLIVELQKTL (129 aa)).

This sequence belongs to the GST superfamily. HSP26 family. As to quaternary structure, homodimer. degradation; (R)-lactate from methylglyoxal: step 1/2.

The catalysed reaction is RX + glutathione = an S-substituted glutathione + a halide anion + H(+). In terms of biological role, conjugation of reduced glutathione to a wide number of exogenous and endogenous hydrophobic electrophiles. Involved in the detoxification of certain herbicides. This Glycine max (Soybean) protein is Glutathione S-transferase 3 (GST3).